Here is a 61-residue protein sequence, read N- to C-terminus: Insect toxin LqhIT5 (61 aa).

An LCN-type CS-alpha/beta domain is found at 1–61 (DGYIRGGDGC…EWKYETNTCG (61 aa)). 4 disulfide bridges follow: C10-C60, C14-C35, C21-C42, and C25-C44.

Belongs to the long (4 C-C) scorpion toxin superfamily. Sodium channel inhibitor family. Beta subfamily. As to expression, expressed by the venom gland.

It localises to the secreted. Excitatory insect beta-toxins induce a spastic paralysis. They bind voltage-independently at site-4 of sodium channels (Nav) and shift the voltage of activation toward more negative potentials thereby affecting sodium channel activation and promoting spontaneous and repetitive firing. This toxin is active only on insects. It operates by inducing a fast contraction paralysis without depressant activity. It is more similar to the excitatory toxins in its mode of action and the depressant toxins in its primary structure. This chain is Insect toxin LqhIT5, found in Leiurus hebraeus (Hebrew deathstalker scorpion).